Here is a 270-residue protein sequence, read N- to C-terminus: Structure-specific endonuclease subunit SLX1 (270 aa).

Residues 9 to 94 (RFFGVYLLYC…PQASRRLTHV (86 aa)) enclose the GIY-YIG domain. The segment at 182 to 234 (CSLCARLLQDEEGPLCCPHPGCPLRAHIICLAEEFLQEEPGQLLPLEGHCPSC) adopts an SLX1-type zinc-finger fold.

This sequence belongs to the SLX1 family. In terms of assembly, forms a heterodimer with SLX4. A divalent metal cation is required as a cofactor. Expressed in testis, colon, bone marrow, brain, thymus and to a lesser extent in heart, kidney, skeletal muscle and spleen.

The protein resides in the nucleus. Catalytic subunit of the SLX1-SLX4 structure-specific endonuclease that resolves DNA secondary structures generated during DNA repair and recombination. Has endonuclease activity towards branched DNA substrates, introducing single-strand cuts in duplex DNA close to junctions with ss-DNA. Has a preference for 5'-flap structures, and promotes symmetrical cleavage of static and migrating Holliday junctions (HJs). Resolves HJs by generating two pairs of ligatable, nicked duplex products. The sequence is that of Structure-specific endonuclease subunit SLX1 (Slx1b) from Mus musculus (Mouse).